The chain runs to 422 residues: Sphingomyelin phosphodiesterase 2 (422 aa).

Glu49 contributes to the Mg(2+) binding site. His272 (proton acceptor) is an active-site residue. 2 helical membrane-spanning segments follow: residues 325 to 345 (ALFGYVMILGLSLLVLLCVLA) and 354 to 374 (AIMLWTPSVGLVLGAGAVYLF). The disordered stretch occupies residues 397 to 422 (TETQDLGSEPHPTHCRQQEADRAEEK). The segment covering 412–422 (RQQEADRAEEK) has biased composition (basic and acidic residues).

Belongs to the neutral sphingomyelinase family. It depends on Mg(2+) as a cofactor.

The protein resides in the membrane. The enzyme catalyses a sphingomyelin + H2O = phosphocholine + an N-acylsphing-4-enine + H(+). It catalyses the reaction 1-O-octadecyl-sn-glycero-3-phosphocholine + H2O = 1-O-octadecyl-sn-glycerol + phosphocholine + H(+). The catalysed reaction is an N-(acyl)-sphingosylphosphocholine + H2O = an N-acyl-sphingoid base + phosphocholine + H(+). It carries out the reaction 1-hexadecanoyl-sn-glycero-3-phosphocholine + H2O = 1-hexadecanoyl-sn-glycerol + phosphocholine + H(+). The enzyme catalyses a sphingosylphosphocholine + H2O = a sphingoid base + phosphocholine + H(+). It catalyses the reaction 1-O-hexadecyl-sn-glycero-3-phosphocholine + H2O = 1-O-hexadecyl-sn-glycerol + phosphocholine + H(+). It participates in lipid metabolism; sphingolipid metabolism. Its function is as follows. Catalyzes the hydrolysis of sphingomyelin to form ceramide and phosphocholine. Ceramide mediates numerous cellular functions, such as apoptosis and growth arrest, and is capable of regulating these 2 cellular events independently. Also hydrolyzes sphingosylphosphocholine. Hydrolyze 1-acyl-2-lyso-sn-glycero-3-phosphocholine (lyso-PC) and 1-O-alkyl-2-lyso-sn-glycero-3-phosphocholine (lyso-platelet-activating factor). This is Sphingomyelin phosphodiesterase 2 (Smpd2) from Rattus norvegicus (Rat).